We begin with the raw amino-acid sequence, 318 residues long: tRNA-modifying protein YgfZ (318 aa).

Folate contacts are provided by Trp-28 and Trp-182.

This sequence belongs to the tRNA-modifying YgfZ family.

It localises to the cytoplasm. In terms of biological role, folate-binding protein involved in regulating the level of ATP-DnaA and in the modification of some tRNAs. It is probably a key factor in regulatory networks that act via tRNA modification, such as initiation of chromosomal replication. This Aliivibrio fischeri (strain MJ11) (Vibrio fischeri) protein is tRNA-modifying protein YgfZ.